The sequence spans 84 residues: MLGINVKKTNEELIISWQLAEITIPLRDVIEVTEDATYAGVEEVDVIRIGTAYGTTDRILIKTVKQNYVLFTTNKVAILNAIHA.

It belongs to the UPF0457 family.

This chain is UPF0457 protein BC_3525, found in Bacillus cereus (strain ATCC 14579 / DSM 31 / CCUG 7414 / JCM 2152 / NBRC 15305 / NCIMB 9373 / NCTC 2599 / NRRL B-3711).